We begin with the raw amino-acid sequence, 382 residues long: LIM homeobox transcription factor 1-alpha (382 aa).

LIM zinc-binding domains lie at 33-92 (SVCE…LFAV) and 92-154 (VKCG…EREL). Disordered stretches follow at residues 161–208 (AASD…QQRR) and 252–285 (KLAR…GMEG). The segment at residues 195–254 (PKRPRTILTTQQRRAFKASFEVSSKPCRKVRETLAAETGLSVRVVQVWFQNQRAKMKKLA) is a DNA-binding region (homeobox). Residues 256–269 (RQQQQQQDQQNTQR) show a composition bias toward low complexity.

As to expression, isoform 1 is expressed in many tissues. Not found in heart, liver, spleen and testis. Relatively highly expressed in fetal brain. Isoform LMX1A-4AB is expressed in testis.

The protein resides in the nucleus. Its function is as follows. Acts as a transcriptional activator by binding to an A/T-rich sequence, the FLAT element, in the insulin gene promoter. Required for development of the roof plate and, in turn, for specification of dorsal cell fates in the CNS and developing vertebrae. The protein is LIM homeobox transcription factor 1-alpha (LMX1A) of Homo sapiens (Human).